The primary structure comprises 183 residues: Hypoxanthine/guanine phosphoribosyltransferase (183 aa).

This sequence belongs to the purine/pyrimidine phosphoribosyltransferase family. Archaeal HPRT subfamily. In terms of assembly, homodimer.

It is found in the cytoplasm. The enzyme catalyses IMP + diphosphate = hypoxanthine + 5-phospho-alpha-D-ribose 1-diphosphate. The catalysed reaction is GMP + diphosphate = guanine + 5-phospho-alpha-D-ribose 1-diphosphate. It functions in the pathway purine metabolism; IMP biosynthesis via salvage pathway; IMP from hypoxanthine: step 1/1. Functionally, catalyzes a salvage reaction resulting in the formation of IMP that is energically less costly than de novo synthesis. This is Hypoxanthine/guanine phosphoribosyltransferase from Methanocaldococcus infernus (strain DSM 11812 / JCM 15783 / ME).